Consider the following 492-residue polypeptide: UDP-N-acetylmuramoyl-L-alanyl-D-glutamate--2,6-diaminopimelate ligase (492 aa).

Serine 21 provides a ligand contact to UDP-N-acetyl-alpha-D-muramoyl-L-alanyl-D-glutamate. Position 98 to 104 (98 to 104 (GTNGKSS)) interacts with ATP. UDP-N-acetyl-alpha-D-muramoyl-L-alanyl-D-glutamate is bound by residues 144–145 (TT), serine 171, glutamine 177, and arginine 179. Lysine 211 is subject to N6-carboxylysine. Residues arginine 372, 396-399 (DNPR), glycine 446, and glutamate 450 each bind meso-2,6-diaminopimelate. A Meso-diaminopimelate recognition motif motif is present at residues 396-399 (DNPR).

It belongs to the MurCDEF family. MurE subfamily. The cofactor is Mg(2+). Post-translationally, carboxylation is probably crucial for Mg(2+) binding and, consequently, for the gamma-phosphate positioning of ATP.

The protein localises to the cytoplasm. The enzyme catalyses UDP-N-acetyl-alpha-D-muramoyl-L-alanyl-D-glutamate + meso-2,6-diaminopimelate + ATP = UDP-N-acetyl-alpha-D-muramoyl-L-alanyl-gamma-D-glutamyl-meso-2,6-diaminopimelate + ADP + phosphate + H(+). Its pathway is cell wall biogenesis; peptidoglycan biosynthesis. Catalyzes the addition of meso-diaminopimelic acid to the nucleotide precursor UDP-N-acetylmuramoyl-L-alanyl-D-glutamate (UMAG) in the biosynthesis of bacterial cell-wall peptidoglycan. The protein is UDP-N-acetylmuramoyl-L-alanyl-D-glutamate--2,6-diaminopimelate ligase of Rickettsia typhi (strain ATCC VR-144 / Wilmington).